A 428-amino-acid chain; its full sequence is Hemagglutinin-esterase (428 aa).

An N-terminal signal peptide occupies residues 1 to 19 (MCIAMAPRTLLLLIXCQLV). The esterase domain 1 stretch occupies residues 9–129 (TLLLLIXCQL…DNKRWMGNKA (121 aa)). At 20–404 (FGFNEPLNIV…PVCIYDPLPV (385 aa)) the chain is on the virion surface side. Ser-42 acts as the Nucleophile in catalysis. An intrachain disulfide couples Cys-46 to Cys-67. N-linked (GlcNAc...) asparagine; by host glycosylation is found at Asn-91, Asn-149, Asn-193, Asn-243, and Asn-313. A disulfide bridge links Cys-115 with Cys-164. The interval 130–278 (RFYARVYEKM…GNYKAVSLEY (149 aa)) is receptor binding. Cystine bridges form between Cys-199-Cys-288 and Cys-207-Cys-261. The esterase domain 2 stretch occupies residues 279–392 (LLSLPSKAIC…HCPTAANIGY (114 aa)). Cys-319 and Cys-324 are oxidised to a cystine. Residues Asn-328 and Asn-332 are each glycosylated (N-linked (GlcNAc...) asparagine; by host). Active-site charge relay system residues include Asp-339 and His-342. 2 N-linked (GlcNAc...) asparagine; by host glycosylation sites follow: Asn-357 and Asn-371. A disulfide bond links Cys-360 and Cys-384. The chain crosses the membrane as a helical span at residues 405–425 (ILLGVLLGIAVLIIVFLNVLF). Residues 426-428 (YDG) lie on the Intravirion side of the membrane.

It belongs to the influenza type C/coronaviruses hemagglutinin-esterase family. Homodimer; disulfide-linked. Forms a complex with the M protein in the pre-Golgi. Associates then with S-M complex to form a ternary complex S-M-HE. Post-translationally, N-glycosylated in the RER. In terms of processing, N-glycosylated in the host RER.

It localises to the virion membrane. It is found in the host cell membrane. The catalysed reaction is N-acetyl-9-O-acetylneuraminate + H2O = N-acetylneuraminate + acetate + H(+). The enzyme catalyses N-acetyl-4-O-acetylneuraminate + H2O = N-acetylneuraminate + acetate + H(+). Structural protein that makes short spikes at the surface of the virus. Contains receptor binding and receptor-destroying activities. Mediates de-O-acetylation of N-acetyl-4-O-acetylneuraminic acid, which is probably the receptor determinant recognized by the virus on the surface of erythrocytes and susceptible cells. This receptor-destroying activity is important for virus release as it probably helps preventing self-aggregation and ensures the efficient spread of the progeny virus from cell to cell. May serve as a secondary viral attachment protein for initiating infection, the spike protein being the major one. May become a target for both the humoral and the cellular branches of the immune system. The chain is Hemagglutinin-esterase from Mus musculus (Mouse).